A 170-amino-acid polypeptide reads, in one-letter code: RNA pyrophosphohydrolase (170 aa).

The Nudix hydrolase domain maps to 6–150 (GFRPNVGIIL…KRDVYRRALR (145 aa)). Residues 39-60 (GGINAHESPEQALYRELHEEVG) carry the Nudix box motif.

This sequence belongs to the Nudix hydrolase family. RppH subfamily. It depends on a divalent metal cation as a cofactor.

Its function is as follows. Accelerates the degradation of transcripts by removing pyrophosphate from the 5'-end of triphosphorylated RNA, leading to a more labile monophosphorylated state that can stimulate subsequent ribonuclease cleavage. The polypeptide is RNA pyrophosphohydrolase (Cellvibrio japonicus (strain Ueda107) (Pseudomonas fluorescens subsp. cellulosa)).